The chain runs to 158 residues: Cytochrome c-type biogenesis protein CcmE (158 aa).

The Cytoplasmic segment spans residues 1–8 (MMRHRNRR). Residues 9–29 (LATIAASAIVLVVAVGLGLMA) form a helical; Signal-anchor for type II membrane protein membrane-spanning segment. Residues 30 to 158 (LRSAVVFFYS…PSAAGDGDSR (129 aa)) are Periplasmic-facing. Residues His123 and Tyr127 each contribute to the heme site. A disordered region spans residues 139-158 (AGVWQGEGETPSAAGDGDSR).

Belongs to the CcmE/CycJ family.

It localises to the cell inner membrane. Functionally, heme chaperone required for the biogenesis of c-type cytochromes. Transiently binds heme delivered by CcmC and transfers the heme to apo-cytochromes in a process facilitated by CcmF and CcmH. The sequence is that of Cytochrome c-type biogenesis protein CcmE from Maricaulis maris (strain MCS10) (Caulobacter maris).